The chain runs to 290 residues: Glycine--tRNA ligase alpha subunit (290 aa).

The protein belongs to the class-II aminoacyl-tRNA synthetase family. Tetramer of two alpha and two beta subunits.

It localises to the cytoplasm. The catalysed reaction is tRNA(Gly) + glycine + ATP = glycyl-tRNA(Gly) + AMP + diphosphate. This Gloeobacter violaceus (strain ATCC 29082 / PCC 7421) protein is Glycine--tRNA ligase alpha subunit.